We begin with the raw amino-acid sequence, 334 residues long: MLIFISNMEELLIENSQRFTIFPIQHPECWNWYKKLESLTWTAQEVDMCKDIDDWEAMPKPQREFYKQILAFFVVADEIVIENLLTNFMREIKVKEVLYFYTMQAAQECVHSEAYSIQVKTLIPDEKEQQRIFSGIEKHPIIKKMAQWVRQWMDPDRNTLGERLVGFAAVEGILFQNHFVAIQFLKEQNIMPGLVSYNEFISRDEGVHCSFACFLISNYVYNIPEEKIIHKILKEAVELVDEFINYAFDKARGRVPGFSKEMLFQYIRYFTDNLCFMMQCKSIYKVGNPFPQMTKFFLNEVEKTNFFELRPTQYQNCVKDDAFAFKLFLNDDDF.

Fe cation is bound by residues aspartate 77, glutamate 108, and histidine 111. Residue tyrosine 115 is part of the active site. Residues glutamate 171, glutamate 205, and histidine 208 each contribute to the Fe cation site.

The protein belongs to the ribonucleoside diphosphate reductase small chain family. In terms of assembly, heterotetramer composed of a homodimer of the large subunit (R1) and a homodimer of the small subunit (R2). Larger multisubunit protein complex are also active, composed of (R1)n(R2)n. Fe cation is required as a cofactor.

The catalysed reaction is a 2'-deoxyribonucleoside 5'-diphosphate + [thioredoxin]-disulfide + H2O = a ribonucleoside 5'-diphosphate + [thioredoxin]-dithiol. In terms of biological role, ribonucleoside-diphosphate reductase holoenzyme provides the precursors necessary for viral DNA synthesis. Allows virus growth in non-dividing cells. Catalyzes the biosynthesis of deoxyribonucleotides from the corresponding ribonucleotides. The chain is Ribonucleoside-diphosphate reductase small chain from Ornithodoros (relapsing fever ticks).